A 243-amino-acid polypeptide reads, in one-letter code: Voltage-gated monoatomic cation channel TMEM109 (243 aa).

An N-terminal signal peptide occupies residues 1–33; the sequence is MAGAHSNPSWSRHLFKAVLMVLGALLLVHSASA. Topologically, residues 34 to 83 are lumenal; that stretch reads QTHREFASPGQQKRESSADILTEIGRSLKETLDTWLGPETMHVISETLLQ. A helical membrane pass occupies residues 84–104; the sequence is VMWAISSAISVACFALSGIAA. Residues 105–135 lie on the Cytoplasmic side of the membrane; that stretch reads QLLSALGLDGEQLTQVLKLSPSQVQTLLLWG. A helical transmembrane segment spans residues 136 to 156; it reads AAALVIYWLLSLLLGLVLALL. At 157–185 the chain is on the lumenal side; that stretch reads GRILGGLKLVLFVAGFVGLVRSVPDPSTR. A helical membrane pass occupies residues 186–205; that stretch reads ALLLLALLTVFALLSRLTGS. The Cytoplasmic portion of the chain corresponds to 206–243; sequence RSSGTHLEAKVRGLERQIEELRGRQRRAAKIPRSMEEE.

As to quaternary structure, homooligomer. Interacts with CRYAB; in the cellular response to DNA damage.

The protein resides in the nucleus outer membrane. It localises to the endoplasmic reticulum membrane. The protein localises to the sarcoplasmic reticulum membrane. It catalyses the reaction K(+)(in) = K(+)(out). It carries out the reaction Ca(2+)(in) = Ca(2+)(out). Functionally, functions as a voltage-gated monoatomic cation channel permeable to both potassium and calcium. Plays a role in the cellular response to DNA damage. The sequence is that of Voltage-gated monoatomic cation channel TMEM109 from Rattus norvegicus (Rat).